Here is a 138-residue protein sequence, read N- to C-terminus: uncharacterized protein (138 aa).

This is an uncharacterized protein from Thiocystis violacea.